We begin with the raw amino-acid sequence, 271 residues long: Bis(5'-nucleosyl)-tetraphosphatase, symmetrical (271 aa).

Belongs to the Ap4A hydrolase family.

The catalysed reaction is P(1),P(4)-bis(5'-adenosyl) tetraphosphate + H2O = 2 ADP + 2 H(+). Its function is as follows. Hydrolyzes diadenosine 5',5'''-P1,P4-tetraphosphate to yield ADP. This chain is Bis(5'-nucleosyl)-tetraphosphatase, symmetrical, found in Aliivibrio fischeri (strain MJ11) (Vibrio fischeri).